We begin with the raw amino-acid sequence, 319 residues long: MKIGIVGLGRVGSSTAFALLMKGFAREMVLIDVDKKRAEGDALDLIHGTPFTRRANIYAGDYADLKGSDVVIVAAGVPQKPGETRLQLLGRNARVMKEIARNVSKYAPDSIVIVVTNPVDVLTYFFLKESGMDPRKVFGSGTVLDTARLRTLIAQHCGFSPRSVHVYVIGEHGDSEVPVWSGAMIGGIPLQNMCQICQKCDSKILENFAEKTKRAAYEIIERKGATHYAIALAVADIVESIFFDEKRVLTLSVYLEDYLGVKDLCISVPVTLGKHGVERILELNLNEEELEAFRKSASILKNAINEITAEENKHQNTSG.

Residues 10 to 11, Asp32, Arg37, Tyr62, and 76 to 77 each bind NAD(+); these read RV and GV. Substrate is bound by residues Gln79, Arg85, and 117-120; that span reads NPVD. Residues 115–117 and Ser140 each bind NAD(+); that span reads VTN. 145-148 is a binding site for substrate; the sequence is DTAR. Arg150 and His165 together coordinate beta-D-fructose 1,6-bisphosphate. The active-site Proton acceptor is His172. Position 217 is a phosphotyrosine (Tyr217). Residue Thr226 coordinates substrate.

The protein belongs to the LDH/MDH superfamily. LDH family. As to quaternary structure, homotetramer.

It is found in the cytoplasm. The catalysed reaction is (S)-lactate + NAD(+) = pyruvate + NADH + H(+). The protein operates within fermentation; pyruvate fermentation to lactate; (S)-lactate from pyruvate: step 1/1. Its activity is regulated as follows. Allosterically activated by fructose 1,6-bisphosphate (FBP). Inactivated by Mn(2+), Co(2+), Cd(2+) and Zn(2+). Catalyzes the conversion of lactate to pyruvate. It is stereospecific for L(+)-lactate. This Thermotoga maritima (strain ATCC 43589 / DSM 3109 / JCM 10099 / NBRC 100826 / MSB8) protein is L-lactate dehydrogenase.